Consider the following 453-residue polypeptide: Ribulose bisphosphate carboxylase large chain (453 aa).

The propeptide occupies M1–S2. Position 3 is an N-acetylproline (P3). Residue K14 is modified to N6,N6,N6-trimethyllysine. Substrate-binding residues include N123 and T173. K175 serves as the catalytic Proton acceptor. K177 lines the substrate pocket. Mg(2+) is bound by residues K201, D203, and E204. K201 carries the N6-carboxylysine modification. H294 functions as the Proton acceptor in the catalytic mechanism. The substrate site is built by R295, H327, and S379.

Belongs to the RuBisCO large chain family. Type I subfamily. Heterohexadecamer of 8 large chains and 8 small chains; disulfide-linked. The disulfide link is formed within the large subunit homodimers. Requires Mg(2+) as cofactor. In terms of processing, the disulfide bond which can form in the large chain dimeric partners within the hexadecamer appears to be associated with oxidative stress and protein turnover.

Its subcellular location is the plastid. The protein localises to the chloroplast. The catalysed reaction is 2 (2R)-3-phosphoglycerate + 2 H(+) = D-ribulose 1,5-bisphosphate + CO2 + H2O. The enzyme catalyses D-ribulose 1,5-bisphosphate + O2 = 2-phosphoglycolate + (2R)-3-phosphoglycerate + 2 H(+). Functionally, ruBisCO catalyzes two reactions: the carboxylation of D-ribulose 1,5-bisphosphate, the primary event in carbon dioxide fixation, as well as the oxidative fragmentation of the pentose substrate in the photorespiration process. Both reactions occur simultaneously and in competition at the same active site. The protein is Ribulose bisphosphate carboxylase large chain of Crucianella angustifolia (Narrow-leaved crosswort).